Reading from the N-terminus, the 771-residue chain is Probable cation-transporting ATPase G (771 aa).

The HMA domain maps to 19–86 (GRMRVQATGF…AIIDAETVPA (68 aa)). The helical transmembrane segment at 72-92 (AAILSAIIDAETVPAAAVPAY) threads the bilayer. The interval 122–143 (DVAAQPSGETSDACCDGEDNED) is disordered. 5 helical membrane-spanning segments follow: residues 163-183 (VLLT…VVLG), 209-229 (VGVG…GELG), 330-350 (VFAG…ATAA), 387-407 (MIAA…LVWI), and 411-431 (LVVL…VTVV). Catalysis depends on Asp-462, which acts as the 4-aspartylphosphate intermediate. Mg(2+)-binding residues include Asp-651 and Asp-655. 2 consecutive transmembrane segments (helical) span residues 657 to 677 (PALA…DVAI) and 716 to 736 (IITV…AVVL).

Belongs to the cation transport ATPase (P-type) (TC 3.A.3) family. Type IB subfamily.

It is found in the cell membrane. The enzyme catalyses ATP + H2O = ADP + phosphate + H(+). The chain is Probable cation-transporting ATPase G (ctpG) from Mycobacterium bovis (strain ATCC BAA-935 / AF2122/97).